The sequence spans 214 residues: Nucleoside triphosphate pyrophosphatase (214 aa).

Aspartate 79 functions as the Proton acceptor in the catalytic mechanism.

Belongs to the Maf family. A divalent metal cation is required as a cofactor.

The protein resides in the cytoplasm. The enzyme catalyses a ribonucleoside 5'-triphosphate + H2O = a ribonucleoside 5'-phosphate + diphosphate + H(+). The catalysed reaction is a 2'-deoxyribonucleoside 5'-triphosphate + H2O = a 2'-deoxyribonucleoside 5'-phosphate + diphosphate + H(+). Nucleoside triphosphate pyrophosphatase. May have a dual role in cell division arrest and in preventing the incorporation of modified nucleotides into cellular nucleic acids. This is Nucleoside triphosphate pyrophosphatase from Rhodococcus jostii (strain RHA1).